We begin with the raw amino-acid sequence, 106 residues long: ATP-dependent Clp protease adapter protein ClpS (106 aa).

The protein belongs to the ClpS family. As to quaternary structure, binds to the N-terminal domain of the chaperone ClpA.

In terms of biological role, involved in the modulation of the specificity of the ClpAP-mediated ATP-dependent protein degradation. This chain is ATP-dependent Clp protease adapter protein ClpS, found in Escherichia coli O139:H28 (strain E24377A / ETEC).